A 1028-amino-acid chain; its full sequence is Contactin-6 (1028 aa).

A signal peptide spans 1–19 (MRLLWKLVILLPLINSSAG). Ig-like C2-type domains follow at residues 26-117 (PIFT…AKLQ), 122-208 (EDFE…RSVQ), 227-308 (PKIE…RNLA), 318-402 (PEWE…AELR), 408-495 (PDFS…GSLI), and 499-587 (RTVI…ESLS). Intrachain disulfides connect Cys50–Cys100, Cys144–Cys196, Cys249–Cys297, Cys339–Cys386, Cys431–Cys479, and Cys521–Cys577. Residues Asn65 and Asn193 are each glycosylated (N-linked (GlcNAc...) asparagine). Asn368, Asn377, and Asn468 each carry an N-linked (GlcNAc...) asparagine glycan. Fibronectin type-III domains are found at residues 600 to 698 (PPED…TKAS), 703 to 800 (APVN…SGED), 805 to 901 (APRG…TKKS), and 902 to 996 (PPSQ…KMSS). N-linked (GlcNAc...) asparagine glycans are attached at residues Asn659, Asn765, Asn860, and Asn865. A Phosphotyrosine modification is found at Tyr882. Residues 887–902 (TGPSSPPVNVTTKKSP) show a composition bias toward polar residues. The interval 887–908 (TGPSSPPVNVTTKKSPPSQPPA) is disordered. N-linked (GlcNAc...) asparagine glycosylation is found at Asn895, Asn931, Asn956, and Asn957. Ser999 carries the GPI-anchor amidated serine lipid modification. Positions 1000 to 1028 (RGIQFLEPSTHFLSIVIVIFHCFAIQPLI) are cleaved as a propeptide — removed in mature form.

Belongs to the immunoglobulin superfamily. Contactin family. In terms of assembly, interacts with PTPRG. As to expression, expressed in nervous system. Highly expressed in cerebellum. Expressed at intermediate level in thalamus, subthalamic nucleus. Weakly expressed in corpus callosum, caudate nucleus and spinal cord.

Its subcellular location is the cell membrane. In terms of biological role, contactins mediate cell surface interactions during nervous system development. Participates in oligodendrocytes generation by acting as a ligand of NOTCH1. Its association with NOTCH1 promotes NOTCH1 activation through the released notch intracellular domain (NICD) and subsequent translocation to the nucleus. Involved in motor coordination. This chain is Contactin-6 (CNTN6), found in Homo sapiens (Human).